A 211-amino-acid polypeptide reads, in one-letter code: Protein-L-isoaspartate O-methyltransferase (211 aa).

Residue Ser60 is part of the active site.

The protein belongs to the methyltransferase superfamily. L-isoaspartyl/D-aspartyl protein methyltransferase family.

Its subcellular location is the cytoplasm. It catalyses the reaction [protein]-L-isoaspartate + S-adenosyl-L-methionine = [protein]-L-isoaspartate alpha-methyl ester + S-adenosyl-L-homocysteine. In terms of biological role, catalyzes the methyl esterification of L-isoaspartyl residues in peptides and proteins that result from spontaneous decomposition of normal L-aspartyl and L-asparaginyl residues. It plays a role in the repair and/or degradation of damaged proteins. This chain is Protein-L-isoaspartate O-methyltransferase, found in Pseudomonas savastanoi pv. phaseolicola (strain 1448A / Race 6) (Pseudomonas syringae pv. phaseolicola (strain 1448A / Race 6)).